The sequence spans 315 residues: piRNA biogenesis protein EXD1 (315 aa).

Residues 141–228 form the 3'-5' exonuclease domain; sequence IYIFDIQVMQ…ECLTNYLGLQ (88 aa).

It belongs to the EXD1 family. In terms of assembly, homodimer. Component of the PET complex, at least composed of EXD1, SIWI, TDRD12 and piRNAs.

It localises to the cytoplasm. Its function is as follows. RNA-binding component of the PET complex, a multiprotein complex required for the processing of piRNAs during spermatogenesis. The piRNA metabolic process mediates the repression of transposable elements during meiosis by forming complexes composed of piRNAs and Piwi proteins and governs the methylation and subsequent repression of transposable elements, preventing their mobilization, which is essential for the germline integrity. The PET complex is required during the secondary piRNAs metabolic process for the PIWIL2 slicing-triggered loading of PIWIL4 piRNAs. In the PET complex, EXD1 probably acts as an RNA adapter. EXD1 is an inactive exonuclease. The polypeptide is piRNA biogenesis protein EXD1 (Bombyx mori (Silk moth)).